We begin with the raw amino-acid sequence, 144 residues long: Small ribosomal subunit protein uS12 (144 aa).

The segment at 1-55 (MPTINQLVRKGREDKVVKSKSPALQKGYNSFKKSQTNQSSPQKRGVCTRVGTMTP) is disordered. The segment covering 27–42 (GYNSFKKSQTNQSSPQ) has biased composition (polar residues). Asp102 is subject to 3-methylthioaspartic acid. The disordered stretch occupies residues 119–144 (GVNNRKQGRSKYGTKRPKPGQAAAKK). Residues 124–144 (KQGRSKYGTKRPKPGQAAAKK) are compositionally biased toward basic residues.

The protein belongs to the universal ribosomal protein uS12 family. As to quaternary structure, part of the 30S ribosomal subunit. Contacts proteins S8 and S17. May interact with IF1 in the 30S initiation complex.

Functionally, with S4 and S5 plays an important role in translational accuracy. Interacts with and stabilizes bases of the 16S rRNA that are involved in tRNA selection in the A site and with the mRNA backbone. Located at the interface of the 30S and 50S subunits, it traverses the body of the 30S subunit contacting proteins on the other side and probably holding the rRNA structure together. The combined cluster of proteins S8, S12 and S17 appears to hold together the shoulder and platform of the 30S subunit. The sequence is that of Small ribosomal subunit protein uS12 from Brevibacillus brevis (strain 47 / JCM 6285 / NBRC 100599).